The chain runs to 273 residues: Phosphatidylglycerol--prolipoprotein diacylglyceryl transferase (273 aa).

A run of 7 helical transmembrane segments spans residues 21 to 41 (ISVRWYGLMYLVGFMFALWLA), 60 to 80 (LLFAGFLGVVLGGRIGYVLFY), 95 to 115 (VWTGGMSFHGGLLGVITAMLW), 124 to 144 (FFGVADMIAPLVPFGLGMGRM), 176 to 196 (SQLYEMALEGIVLFFILNWFI), 203 to 223 (GSVSGLFLAGYGTFRFLVEYV), and 236 to 256 (FISMGQILSLPMVIIGVLMMV). Arg143 provides a ligand contact to a 1,2-diacyl-sn-glycero-3-phospho-(1'-sn-glycerol).

Belongs to the Lgt family.

It is found in the cell inner membrane. The catalysed reaction is L-cysteinyl-[prolipoprotein] + a 1,2-diacyl-sn-glycero-3-phospho-(1'-sn-glycerol) = an S-1,2-diacyl-sn-glyceryl-L-cysteinyl-[prolipoprotein] + sn-glycerol 1-phosphate + H(+). It participates in protein modification; lipoprotein biosynthesis (diacylglyceryl transfer). In terms of biological role, catalyzes the transfer of the diacylglyceryl group from phosphatidylglycerol to the sulfhydryl group of the N-terminal cysteine of a prolipoprotein, the first step in the formation of mature lipoproteins. The protein is Phosphatidylglycerol--prolipoprotein diacylglyceryl transferase of Vibrio atlanticus (strain LGP32) (Vibrio splendidus (strain Mel32)).